A 134-amino-acid chain; its full sequence is Thioredoxin H2-2 (134 aa).

The tract at residues 1–20 is disordered; that stretch reads MGSFFSTMFTPPPAADDGGD. The region spanning 3-130 is the Thioredoxin domain; the sequence is SFFSTMFTPP…LERKVNMFIS (128 aa). Residues cysteine 56 and cysteine 59 each act as nucleophile in the active site. Cysteine 56 and cysteine 59 are oxidised to a cystine.

Belongs to the thioredoxin family. Plant H-type subfamily.

The protein resides in the cytoplasm. In terms of biological role, probable thiol-disulfide oxidoreductase that may be involved in the redox regulation of a number of cytosolic enzymes. In Oryza sativa subsp. japonica (Rice), this protein is Thioredoxin H2-2.